Consider the following 551-residue polypeptide: Cilia- and flagella-associated protein 45 (551 aa).

3 disordered regions span residues 1–52 (MPLR…KSDS), 232–256 (MEID…ERVR), and 385–415 (EQDA…KKIE). The span at 8 to 18 (ASSSASTASNR) shows a compositional bias: low complexity. Residues 276-524 (AEHREQEKEQ…EDIKKQKLEE (249 aa)) are a coiled coil. The span at 387 to 415 (DALRAKRNQEVADREWRRKEKENAQKKIE) shows a compositional bias: basic and acidic residues.

The protein belongs to the CFAP45 family. In terms of assembly, microtubule inner protein component of sperm flagellar doublet microtubules. Interacts with AK8; dimerization with AK8 may create a cavity at the interface of the dimer that can accommodate AMP. Interacts with CFAP52. Interacts with ENKUR. Directly interacts with DNALI1. Interacts with DNAH11. Interacts with DNAI1. Expressed in respiratory cells and in sperm (at protein level).

Its subcellular location is the cytoplasm. The protein localises to the cytoskeleton. The protein resides in the cilium axoneme. It is found in the flagellum axoneme. It localises to the cell projection. Its subcellular location is the cilium. The protein localises to the flagellum. Microtubule inner protein (MIP) part of the dynein-decorated doublet microtubules (DMTs) in cilia axoneme, which is required for motile cilia beating. It is an AMP-binding protein that may facilitate dynein ATPase-dependent ciliary and flagellar beating via adenine nucleotide homeostasis. May function as a donor of AMP to AK8 and hence promote ADP production. This chain is Cilia- and flagella-associated protein 45 (Cfap45), found in Mus musculus (Mouse).